Consider the following 296-residue polypeptide: Cation-efflux pump FieF (296 aa).

Over 1 to 18 the chain is Cytoplasmic; the sequence is MTQTSQYDFWVKLASRAS. A helical transmembrane segment spans residues 19 to 32; that stretch reads VATALTLITIKLLA. Residues 33-43 are Periplasmic-facing; the sequence is WLYSGSASMLA. Residues 44–60 traverse the membrane as a helical segment; sequence SLTDSFADTLASIINFI. Positions 47, 51, 70, 73, and 77 each coordinate Zn(2+). Topologically, residues 61-83 are cytoplasmic; it reads AIRYAIVPADHDHRYGHGKAEPL. A helical membrane pass occupies residues 84-105; the sequence is AALAQSAFIMGSAFLLLFYGGE. Over 106–119 the chain is Periplasmic; it reads RLLNPSPVENATLG. A helical transmembrane segment spans residues 120–138; that stretch reads VVVSVVAIVLTLALVLLQK. The Cytoplasmic segment spans residues 139-145; sequence RALAATN. A helical transmembrane segment spans residues 146-160; that stretch reads STVVEADSLHYKSDL. The Zn(2+) site is built by H155 and D159. Topologically, residues 161–180 are periplasmic; the sequence is FLNAAVLLALVLSQYGWWWA. The chain crosses the membrane as a helical span at residues 181 to 200; the sequence is DGLFAVLIACYIGQQAFDLG. Topologically, residues 201 to 296 are cytoplasmic; that stretch reads YRSIQALLDR…DPVQVEPTTQ (96 aa). Residues H234, D235, H250, H263, H285, and D287 each contribute to the Zn(2+) site.

This sequence belongs to the cation diffusion facilitator (CDF) transporter (TC 2.A.4) family. FieF subfamily. In terms of assembly, homodimer. The subunits are held together in a parallel orientation through zinc binding at the interface of the cytoplasmic domains.

It localises to the cell inner membrane. It carries out the reaction Zn(2+)(in) + H(+)(out) = Zn(2+)(out) + H(+)(in). It catalyses the reaction Cd(2+)(in) + H(+)(out) = Cd(2+)(out) + H(+)(in). The catalysed reaction is Fe(2+)(in) + H(+)(out) = Fe(2+)(out) + H(+)(in). Its activity is regulated as follows. Cytoplasmic zinc binding may trigger movements of two electrically repulsive cytoplasmic domains and reorient transmembrane helices, thereby modulating coordination geometry of the active site for zinc transport. It may modulate activity in response to cytoplasmic metal fluctuations. Divalent metal cation transporter which exports Zn(2+), Cd(2+) and possibly Fe(2+). Zn(2+)/H(+) antiporter capable of using the proton motive force to remove Zn(2+) from the cytoplasm. May be involved in zinc and iron detoxification by efflux. The polypeptide is Cation-efflux pump FieF (Shewanella oneidensis (strain ATCC 700550 / JCM 31522 / CIP 106686 / LMG 19005 / NCIMB 14063 / MR-1)).